Reading from the N-terminus, the 68-residue chain is Suppressor of RNA silencing (68 aa).

A helical transmembrane segment spans residues Leu23–Val43.

Belongs to the virgaviridae suppressor of RNA silencing family.

It localises to the host endoplasmic reticulum membrane. In terms of biological role, suppressor of RNA-mediated gene silencing, also known as post-transcriptional gene silencing (PTGS), a mechanism of plant viral defense that performs sequence-specific inhibition of viral mRNAs expression. The RNA silencing suppression activity is variable depending on the origin of the isolate. The sequence is that of Suppressor of RNA silencing (8K protein) from Solanum nigrum (Black nightshade).